Here is a 466-residue protein sequence, read N- to C-terminus: Putative multidrug resistance protein MdtD (466 aa).

The next 14 helical transmembrane spans lie at 11 to 31 (LWIV…VNTA), 48 to 68 (SVIV…GWLA), 71 to 91 (IGVK…SLLC), 105 to 125 (VIQG…VMKI), 137 to 157 (FVTL…GFLV), 164 to 184 (WIFL…WFLM), 194 to 214 (FDIS…LALD), 218 to 238 (SLGI…IALL), 262 to 282 (FSIG…LPFM), 286 to 306 (FLQL…VPMV), 328 to 347 (VLIV…ALVA), 351 to 370 (WIWM…AIRF), 403 to 423 (LGVS…MAAG), and 429 to 449 (MVFI…ALIF).

Belongs to the major facilitator superfamily. TCR/Tet family.

The protein resides in the cell inner membrane. The sequence is that of Putative multidrug resistance protein MdtD from Pectobacterium carotovorum subsp. carotovorum (strain PC1).